A 759-amino-acid polypeptide reads, in one-letter code: MTAPLWPNKNEKNHTVKRALSTDMTSNILSSTNASSNEENSRSSSAANVRSGTGANTLTNGGSTRKRLACTNCRNRRKKCDLGFPCGNCSRLELVCNVNDEDLRKKRYTNKYVKSLESHIAQLETNLKNLVQKIYPDDEQILNRMMVGDVLSALPDSSQVSINYTDQTPSLPIPATRGTFIIENDKVSQPLSSFNQQTEPSTLNSGIFNTQKQNFEESLDDQLLLRRSLTPQGEKKKKPLVKGSLYPEGPVSYKRKHPVKSDSLLPVSSLTAATDPSTFSDGITAGNSVLVNGELKKRISDLKTTVIVRGLNDDNPNSINNDPRILKSLSNFYKWLYPGYFIFVHRESFLYGFFNHSKNNYEDSSYCSVELIYAMCAVGSRLTPDLQEYSEVYYQRSKKTLLQLVFDEQSTARITTVQALFCLAFYELGKGNNQLGWYFSGLAIRVGYDMGFQLDPKVWYVDDNNLQLTQSELEIRSRIYWGCYIADHFICLMLGRTSTLSVSNSTMPESDELPEVNGTEEFRFIGRHVLQISLPLKNLIILSRLVQIFTSKIFIESEDIARKLKYLNTFNSQVYNWRQSLPEFLQWSKTLIENDDVSTDPTISYFWYCYYIVRLTFNKPFIEDSQESETVVIEIIDDLKTLLDNFGKKFGNYTKGNLYQLYSCLLAINCLKKLKEIRSSEQDSWNAQLDFFNHIFYTQLYPAYDLPKKLQEDTELETEQENQMLNQVGNINYTHDFSLSHEIDDLIRELFGVGTPQKL.

The tract at residues Met-1 to Gly-61 is disordered. Thr-22 bears the Phosphothreonine mark. A compositionally biased stretch (low complexity) spans Ser-30–Ser-51. The zn(2)-C6 fungal-type DNA-binding region spans Cys-70–Cys-96. A disordered region spans residues Leu-229–Lys-254. Positions Asp-744–Gly-752 match the 9aaTAD motif. At Thr-755 the chain carries Phosphothreonine.

The protein resides in the nucleus. Its function is as follows. TY1 element enhancer binding protein. Binds to the DNA sequence 5'-TCGGTGGTATTATTCCGA-3'. This chain is TY1 enhancer activator (TEA1), found in Saccharomyces cerevisiae (strain ATCC 204508 / S288c) (Baker's yeast).